Here is a 414-residue protein sequence, read N- to C-terminus: MSEYIRVTEDENDEPIEIPSEDDGTVLLSTVTAQFPGACGLRYRNPVSQCMRGVRLVEGILHAPDAGWGNLVYVVNYPKDNKRKMDETDASSAVKVKRAVQKTSDLIVLGLPWKTTEQDLKDYFSTFGEVLMVQVKKDLKTGHSKGFGFVRFTEYETQVKVMSQRHMIDGRWCDCKLPNSKQSPDEPLRSRKVFVGRCTEDMTAEELQQFFCQYGEVVDVFIPKPFRAFAFVTFADDKVAQSLCGEDLIIKGISVHISNAEPKHNSNRQLERSGRFGGNPGGFGNQGGFGNSRGGGAGLGNNQGGNMGGGMNFGAFSINPAMMAAAQAALQSSWGMMGMLASQQNQSGPSGNNQSQGSMQREPNQAFGSGNNSYSGSNSGAPLGWGSASNAGSGSGFNGGFGSSMDSKSSGWGM.

Residues Lys79, Lys84, Lys95, Lys102, and Lys181 each participate in a glycyl lysine isopeptide (Lys-Gly) (interchain with G-Cter in SUMO2) cross-link. RRM domains lie at 104-200 (SDLI…RCTE) and 191-262 (RKVF…NAEP). Ser183 carries the post-translational modification Phosphoserine. The segment at 216–414 (EVVDVFIPKP…MDSKSSGWGM (199 aa)) is interaction with UBQLN2. Basic and acidic residues predominate over residues 261–274 (EPKHNSNRQLERSG). Disordered regions lie at residues 261 to 301 (EPKH…GLGN) and 341 to 414 (ASQQ…GWGM). Lys263 participates in a covalent cross-link: Glycyl lysine isopeptide (Lys-Gly) (interchain with G-Cter in SUMO2). Over residues 275-301 (RFGGNPGGFGNQGGFGNSRGGGAGLGN) the composition is skewed to gly residues. Ser292 carries the post-translational modification Phosphoserine. Arg293 is subject to Omega-N-methylarginine. 2 stretches are compositionally biased toward low complexity: residues 342–358 (SQQN…SQGS) and 368–392 (GSGN…SNAG). Residues 393-402 (SGSGFNGGFG) are compositionally biased toward gly residues. Over residues 405–414 (MDSKSSGWGM) the composition is skewed to polar residues.

In terms of assembly, homodimer. Homooligomer (via its N-terminal domain). Interacts with BRDT. Binds specifically to pyrimidine-rich motifs of TAR DNA and to single stranded TG repeated sequences. Binds to RNA, specifically to UG repeated sequences with a minimum of six contiguous repeats. Interacts with ATXN2; the interaction is RNA-dependent. Interacts with MATR3. Interacts with UBQLN2. Interacts with HNRNPA2B1. Interacts with ZNF106. Interacts with CNOT7/CAF1. Interacts with CRY2. Interacts with PPIA/CYPA; the interaction is dependent on RNA-binding activity of TARDBP and PPIase activity of PPIA/CYPA. Acetylation of PPIA/CYPA at 'Lys-125' favors the interaction of TARDBP with PPIA/CYPA. Hyperphosphorylated. In terms of processing, ubiquitinated.

It is found in the nucleus. Its subcellular location is the cytoplasm. The protein localises to the stress granule. It localises to the mitochondrion. Its function is as follows. RNA-binding protein that is involved in various steps of RNA biogenesis and processing. Preferentially binds, via its two RNA recognition motifs RRM1 and RRM2, to GU-repeats on RNA molecules predominantly localized within long introns and in the 3'UTR of mRNAs. In turn, regulates the splicing of many non-coding and protein-coding RNAs including proteins involved in neuronal survival, as well as mRNAs that encode proteins relevant for neurodegenerative diseases. Plays a role in maintaining mitochondrial homeostasis by regulating the processing of mitochondrial transcripts. Also regulates mRNA stability by recruiting CNOT7/CAF1 deadenylase on mRNA 3'UTR leading to poly(A) tail deadenylation and thus shortening. In response to oxidative insult, associates with stalled ribosomes localized to stress granules (SGs) and contributes to cell survival. Also participates in the normal skeletal muscle formation and regeneration, forming cytoplasmic myo-granules and binding mRNAs that encode sarcomeric proteins. Plays a role in the maintenance of the circadian clock periodicity via stabilization of the CRY1 and CRY2 proteins in a FBXL3-dependent manner. Negatively regulates the expression of CDK6. Regulates the expression of HDAC6, ATG7 and VCP in a PPIA/CYPA-dependent manner. The polypeptide is TAR DNA-binding protein 43 (Tardbp) (Mus musculus (Mouse)).